Consider the following 201-residue polypeptide: Probable GTP-binding protein EngB (201 aa).

The EngB-type G domain occupies 22–197; sequence RLPEYAFIGR…LDYIDSINQE (176 aa). Residues 30-37, 57-61, 75-78, 142-145, and 173-178 contribute to the GTP site; these read GRSNVGKS, GKTQL, DLPG, TKAD, and VFITSS. Serine 37 and threonine 59 together coordinate Mg(2+).

The protein belongs to the TRAFAC class TrmE-Era-EngA-EngB-Septin-like GTPase superfamily. EngB GTPase family. Mg(2+) serves as cofactor.

Functionally, necessary for normal cell division and for the maintenance of normal septation. This chain is Probable GTP-binding protein EngB, found in Porphyromonas gingivalis (strain ATCC 33277 / DSM 20709 / CIP 103683 / JCM 12257 / NCTC 11834 / 2561).